The sequence spans 471 residues: Siroheme synthase 1 (471 aa).

Positions 1 to 203 (MDYLPLFAEL…GNSAEAEKAL (203 aa)) are precorrin-2 dehydrogenase /sirohydrochlorin ferrochelatase. NAD(+)-binding positions include 22-23 (EI) and 43-44 (ET). A Phosphoserine modification is found at Ser128. Residues 215–471 (GEIILVGAGP…GFNASVVNLA (257 aa)) are uroporphyrinogen-III C-methyltransferase. S-adenosyl-L-methionine is bound at residue Pro224. The active-site Proton acceptor is Asp247. Lys269 (proton donor) is an active-site residue. Residues 300-302 (GGD), Ile305, 330-331 (TA), Met382, and Gly411 contribute to the S-adenosyl-L-methionine site.

This sequence in the N-terminal section; belongs to the precorrin-2 dehydrogenase / sirohydrochlorin ferrochelatase family. In the C-terminal section; belongs to the precorrin methyltransferase family.

The catalysed reaction is uroporphyrinogen III + 2 S-adenosyl-L-methionine = precorrin-2 + 2 S-adenosyl-L-homocysteine + H(+). It catalyses the reaction precorrin-2 + NAD(+) = sirohydrochlorin + NADH + 2 H(+). It carries out the reaction siroheme + 2 H(+) = sirohydrochlorin + Fe(2+). The protein operates within cofactor biosynthesis; adenosylcobalamin biosynthesis; precorrin-2 from uroporphyrinogen III: step 1/1. It functions in the pathway cofactor biosynthesis; adenosylcobalamin biosynthesis; sirohydrochlorin from precorrin-2: step 1/1. Its pathway is porphyrin-containing compound metabolism; siroheme biosynthesis; precorrin-2 from uroporphyrinogen III: step 1/1. It participates in porphyrin-containing compound metabolism; siroheme biosynthesis; siroheme from sirohydrochlorin: step 1/1. The protein operates within porphyrin-containing compound metabolism; siroheme biosynthesis; sirohydrochlorin from precorrin-2: step 1/1. Its function is as follows. Multifunctional enzyme that catalyzes the SAM-dependent methylations of uroporphyrinogen III at position C-2 and C-7 to form precorrin-2 via precorrin-1. Then it catalyzes the NAD-dependent ring dehydrogenation of precorrin-2 to yield sirohydrochlorin. Finally, it catalyzes the ferrochelation of sirohydrochlorin to yield siroheme. The protein is Siroheme synthase 1 of Klebsiella pneumoniae subsp. pneumoniae (strain ATCC 700721 / MGH 78578).